The chain runs to 198 residues: Syndecan-4 (198 aa).

Positions 1 to 18 (MAPARLFALLLLFVGGVA) are cleaved as a signal peptide. At 19 to 145 (ESIRETEVID…QGSNIFERTE (127 aa)) the chain is on the extracellular side. 3 O-linked (Xyl...) (glycosaminoglycan) serine glycosylation sites follow: serine 39, serine 61, and serine 63. The O-linked (Xyl...) (chondroitin sulfate) serine glycan is linked to serine 95. The helical transmembrane segment at 146-170 (VLAALIVGGIVGILFAVFLILLLMY) threads the bilayer. At 171–198 (RMKKKDEGSYDLGKKPIYKKAPTNEFYA) the chain is on the cytoplasmic side.

Belongs to the syndecan proteoglycan family. As to quaternary structure, homodimer. Interacts with CDCP1 and SDCBP. Interacts (via its cytoplasmic domain) with GIPC (via its PDZ domain). Interacts (via its cytoplasmic domain) with NUDT16L1. Interacts with DNM2; this interaction is markedly enhanced at focal ahesion site upon induction of focal adhesions and stress-fiber formation. Shedding is enhanced by a number of factors such as heparanase, thrombin or EGF. Also by stress and wound healing. PMA-mediated shedding is inhibited by TIMP3. In terms of processing, O-glycosylated; contains both chondroitin sulfate and heparan sulfate. Ser-39, Ser-61 and Ser-63 can all be modified by either chondroitin sulfate or heparan sulfate, and the protein exists in forms that contain only chondroitin sulfate, only heparan sulfate and both chondroitin sulfate and heparan sulfate.

It localises to the membrane. The protein resides in the secreted. Functionally, cell surface proteoglycan which regulates exosome biogenesis in concert with SDCBP and PDCD6IP. This Pongo abelii (Sumatran orangutan) protein is Syndecan-4.